A 117-amino-acid chain; its full sequence is Iron-sulfur cluster insertion protein ErpA (117 aa).

The iron-sulfur cluster site is built by C45, C109, and C111.

Belongs to the HesB/IscA family. Homodimer. It depends on iron-sulfur cluster as a cofactor.

Its function is as follows. Required for insertion of 4Fe-4S clusters for at least IspG. In Hahella chejuensis (strain KCTC 2396), this protein is Iron-sulfur cluster insertion protein ErpA.